Here is a 131-residue protein sequence, read N- to C-terminus: D-ribose pyranase (131 aa).

Residue histidine 20 is the Proton donor of the active site. Substrate contacts are provided by residues aspartate 28, histidine 98, and 120 to 122 (YCN).

This sequence belongs to the RbsD / FucU family. RbsD subfamily. Homodecamer.

The protein resides in the cytoplasm. It catalyses the reaction beta-D-ribopyranose = beta-D-ribofuranose. Its pathway is carbohydrate metabolism; D-ribose degradation; D-ribose 5-phosphate from beta-D-ribopyranose: step 1/2. Catalyzes the interconversion of beta-pyran and beta-furan forms of D-ribose. This chain is D-ribose pyranase, found in Coprothermobacter proteolyticus (strain ATCC 35245 / DSM 5265 / OCM 4 / BT).